The following is a 121-amino-acid chain: ATP synthase epsilon chain (121 aa).

Belongs to the ATPase epsilon chain family. In terms of assembly, F-type ATPases have 2 components, CF(1) - the catalytic core - and CF(0) - the membrane proton channel. CF(1) has five subunits: alpha(3), beta(3), gamma(1), delta(1), epsilon(1). CF(0) has three main subunits: a, b and c.

It is found in the cell membrane. Its function is as follows. Produces ATP from ADP in the presence of a proton gradient across the membrane. This chain is ATP synthase epsilon chain, found in Mycobacterium marinum (strain ATCC BAA-535 / M).